We begin with the raw amino-acid sequence, 588 residues long: A-type ATP synthase subunit A (588 aa).

237 to 244 (GPFGSGKT) provides a ligand contact to ATP.

Belongs to the ATPase alpha/beta chains family. As to quaternary structure, has multiple subunits with at least A(3), B(3), C, D, E, F, H, I and proteolipid K(x).

It localises to the cell membrane. The enzyme catalyses ATP + H2O + 4 H(+)(in) = ADP + phosphate + 5 H(+)(out). In terms of biological role, component of the A-type ATP synthase that produces ATP from ADP in the presence of a proton gradient across the membrane. The A chain is the catalytic subunit. The protein is A-type ATP synthase subunit A of Methanoregula boonei (strain DSM 21154 / JCM 14090 / 6A8).